Here is a 763-residue protein sequence, read N- to C-terminus: Serine/threonine-protein kinase PknG (763 aa).

Positions 1–32 (MKREHMDHDTEDVGQAAQRADPPSGTTEGRLQ) are disordered. Residues 160 to 406 (YEVKGCIAHG…SAEEMSAQLM (247 aa)) form the Protein kinase domain. ATP is bound by residues 166-174 (IAHGGLGWV) and Lys190. The active-site Proton acceptor is the Asp289.

Belongs to the protein kinase superfamily. Ser/Thr protein kinase family. In terms of processing, autophosphorylated.

The enzyme catalyses L-seryl-[protein] + ATP = O-phospho-L-seryl-[protein] + ADP + H(+). It catalyses the reaction L-threonyl-[protein] + ATP = O-phospho-L-threonyl-[protein] + ADP + H(+). This Mycobacterium leprae (strain TN) protein is Serine/threonine-protein kinase PknG (pknG).